Consider the following 297-residue polypeptide: Acetylglutamate kinase (297 aa).

Substrate is bound by residues 73-74 (GG), arginine 95, and asparagine 188.

This sequence belongs to the acetylglutamate kinase family. ArgB subfamily.

Its subcellular location is the cytoplasm. The enzyme catalyses N-acetyl-L-glutamate + ATP = N-acetyl-L-glutamyl 5-phosphate + ADP. The protein operates within amino-acid biosynthesis; L-arginine biosynthesis; N(2)-acetyl-L-ornithine from L-glutamate: step 2/4. Functionally, catalyzes the ATP-dependent phosphorylation of N-acetyl-L-glutamate. In Trichormus variabilis (strain ATCC 29413 / PCC 7937) (Anabaena variabilis), this protein is Acetylglutamate kinase.